Here is a 506-residue protein sequence, read N- to C-terminus: Tyrosine-protein kinase isoform SRK4 (506 aa).

2 stretches are compositionally biased toward polar residues: residues 1 to 10 and 18 to 31; these read MGSCCSSQDG and AGST…SQSV. Residues 1–53 are disordered; the sequence is MGSCCSSQDGDGNGKATAGSTVDSHELSQSVKGKIKQPEPKPKPPPQVPPAQD. The SH3 domain maps to 54–116; the sequence is VKYPIYVGKY…PSNYVAEYKS (63 aa). The SH2 domain maps to 122 to 214; that stretch reads WFFGQVKRVD…GLCVNLKGPC (93 aa). The Protein kinase domain maps to 240–493; sequence IKLLRGLGAG…TLSWQLEEFF (254 aa). Residues 246–254 and lysine 268 each bind ATP; that span reads LGAGQFGEV. The active-site Proton acceptor is aspartate 359.

It belongs to the protein kinase superfamily. Tyr protein kinase family.

It localises to the cytoplasm. It catalyses the reaction L-tyrosyl-[protein] + ATP = O-phospho-L-tyrosyl-[protein] + ADP + H(+). The chain is Tyrosine-protein kinase isoform SRK4 (SRK1) from Spongilla lacustris (Freshwater sponge).